The sequence spans 332 residues: L-lactate dehydrogenase A chain (332 aa).

Residues 29–57 (GMVG…MEDK) and R99 each bind NAD(+). Substrate-binding residues include R106, N138, and R169. Residue N138 coordinates NAD(+). H193 serves as the catalytic Proton acceptor. T248 provides a ligand contact to substrate.

The protein belongs to the LDH/MDH superfamily. LDH family. As to quaternary structure, homotetramer.

It is found in the cytoplasm. It carries out the reaction (S)-lactate + NAD(+) = pyruvate + NADH + H(+). It functions in the pathway fermentation; pyruvate fermentation to lactate; (S)-lactate from pyruvate: step 1/1. In terms of biological role, interconverts simultaneously and stereospecifically pyruvate and lactate with concomitant interconversion of NADH and NAD(+). This chain is L-lactate dehydrogenase A chain (ldha), found in Rhinogobiops nicholsii (Blackeye goby).